Reading from the N-terminus, the 444-residue chain is Phosphoglucosamine mutase (444 aa).

Residue Ser-102 is the Phosphoserine intermediate of the active site. Mg(2+)-binding residues include Ser-102, Asp-241, Asp-243, and Asp-245. At Ser-102 the chain carries Phosphoserine.

The protein belongs to the phosphohexose mutase family. The cofactor is Mg(2+). Post-translationally, activated by phosphorylation.

It catalyses the reaction alpha-D-glucosamine 1-phosphate = D-glucosamine 6-phosphate. Functionally, catalyzes the conversion of glucosamine-6-phosphate to glucosamine-1-phosphate. The polypeptide is Phosphoglucosamine mutase (Erwinia tasmaniensis (strain DSM 17950 / CFBP 7177 / CIP 109463 / NCPPB 4357 / Et1/99)).